We begin with the raw amino-acid sequence, 606 residues long: Dihydroxy-acid dehydratase ilvC, mitochondrial (606 aa).

C84 is a [2Fe-2S] cluster binding site. D116 is a binding site for Mg(2+). C157 is a binding site for [2Fe-2S] cluster. D158 serves as a coordination point for Mg(2+). C232 contacts [2Fe-2S] cluster. Position 485 (E485) interacts with Mg(2+). The active-site Proton acceptor is the S511.

It belongs to the IlvD/Edd family. Requires [2Fe-2S] cluster as cofactor. It depends on Mg(2+) as a cofactor.

It localises to the mitochondrion. It catalyses the reaction (2R)-2,3-dihydroxy-3-methylbutanoate = 3-methyl-2-oxobutanoate + H2O. The catalysed reaction is (2R,3R)-2,3-dihydroxy-3-methylpentanoate = (S)-3-methyl-2-oxopentanoate + H2O. Its pathway is amino-acid biosynthesis; L-isoleucine biosynthesis; L-isoleucine from 2-oxobutanoate: step 3/4. It functions in the pathway amino-acid biosynthesis; L-valine biosynthesis; L-valine from pyruvate: step 3/4. DHAD activity is inhibited in dose-dependent manner by 2-hydroxy-3-methylbutyric acid with an IC(50) of about 8 mM. In terms of biological role, dihydroxyacid dehydratase that catalyzes the third step in the common pathway leading to biosynthesis of branched-chain amino acids. Catalyzes the dehydration of (2R,3R)-2,3-dihydroxy-3-methylpentanoate (2,3-dihydroxy-3-methylvalerate) into 2-oxo-3-methylpentanoate (2-oxo-3-methylvalerate) and of (2R)-2,3-dihydroxy-3-methylbutanoate (2,3-dihydroxyisovalerate) into 2-oxo-3-methylbutanoate (2-oxoisovalerate), the penultimate precursor to L-isoleucine and L-valine, respectively. IlvC and the branched-chain amino acid biosynthesis are crucial for virulence and may be a potential target to develop antifungal agents. In Aspergillus fumigatus (strain ATCC MYA-4609 / CBS 101355 / FGSC A1100 / Af293) (Neosartorya fumigata), this protein is Dihydroxy-acid dehydratase ilvC, mitochondrial.